A 22-amino-acid polypeptide reads, in one-letter code: Unknown protein 20 from 2D-PAGE (22 aa).

This chain is Unknown protein 20 from 2D-PAGE, found in Bombyx mori (Silk moth).